Here is a 176-residue protein sequence, read N- to C-terminus: Large ribosomal subunit protein uL6 (176 aa).

The protein belongs to the universal ribosomal protein uL6 family. As to quaternary structure, part of the 50S ribosomal subunit.

Functionally, this protein binds to the 23S rRNA, and is important in its secondary structure. It is located near the subunit interface in the base of the L7/L12 stalk, and near the tRNA binding site of the peptidyltransferase center. This chain is Large ribosomal subunit protein uL6, found in Burkholderia cenocepacia (strain HI2424).